A 375-amino-acid polypeptide reads, in one-letter code: Probable UDP-N-acetylglucosamine 2-epimerase (375 aa).

It belongs to the UDP-N-acetylglucosamine 2-epimerase family.

The protein localises to the cytoplasm. The enzyme catalyses UDP-N-acetyl-alpha-D-glucosamine = UDP-N-acetyl-alpha-D-mannosamine. It participates in glycan metabolism; exopolysaccharide EPS I biosynthesis. In terms of biological role, may be involved in synthesis of N-acetyltrideoxygalactose, a component of exopolysaccharide EPS I which functions as a virulence factor. In Ralstonia nicotianae (strain ATCC BAA-1114 / GMI1000) (Ralstonia solanacearum), this protein is Probable UDP-N-acetylglucosamine 2-epimerase (epsC).